Reading from the N-terminus, the 362-residue chain is RING-H2 finger protein ATL52 (362 aa).

Residues 58–78 (LIALIGILTSALILVSYYTLI) form a helical membrane-spanning segment. The RING-type; atypical zinc-finger motif lies at 142–184 (CSVCLSEFEENESLRLLPKCNHAFHLPCIDTWLKSHSNCPLCR). Disordered regions lie at residues 252–271 (DARS…DEDS) and 296–333 (EDEE…RSGG). The span at 309-319 (QRREEGEDGDG) shows a compositional bias: basic and acidic residues.

It belongs to the RING-type zinc finger family. ATL subfamily. In terms of tissue distribution, expressed in flowers.

It localises to the membrane. The enzyme catalyses S-ubiquitinyl-[E2 ubiquitin-conjugating enzyme]-L-cysteine + [acceptor protein]-L-lysine = [E2 ubiquitin-conjugating enzyme]-L-cysteine + N(6)-ubiquitinyl-[acceptor protein]-L-lysine.. The protein operates within protein modification; protein ubiquitination. The protein is RING-H2 finger protein ATL52 (ATL52) of Arabidopsis thaliana (Mouse-ear cress).